Reading from the N-terminus, the 63-residue chain is Large ribosomal subunit protein uL29 (63 aa).

The protein belongs to the universal ribosomal protein uL29 family.

The chain is Large ribosomal subunit protein uL29 from Azotobacter vinelandii (strain DJ / ATCC BAA-1303).